We begin with the raw amino-acid sequence, 220 residues long: MRETPSPQTLRAFLNGHGIAVSPQQAEMLFEHVRLMLEWNLRSNLTRITEFDRILTAHLLDSLLPARWLPLTGKTLDVGTGAGFPGVPLKILHPETQMYLLESNRKKVSFLKVLLAGLSLPGIHVLHGRWEEPEGWFTEEDERFTAVIMRAVRVEPGHLTRLAPRVLRPGGVFASWAGSGTETALENRRTHAYPAPAETRSYELPGMSAPRRLYLWRMEG.

Residues G79, F84, and R150 each contribute to the S-adenosyl-L-methionine site.

Belongs to the methyltransferase superfamily. RNA methyltransferase RsmG family.

The protein localises to the cytoplasm. It carries out the reaction guanosine(527) in 16S rRNA + S-adenosyl-L-methionine = N(7)-methylguanosine(527) in 16S rRNA + S-adenosyl-L-homocysteine. Its function is as follows. Specifically methylates the N7 position of guanine in position 527 of 16S rRNA. The chain is Ribosomal RNA small subunit methyltransferase G 1 from Syntrophobacter fumaroxidans (strain DSM 10017 / MPOB).